A 1331-amino-acid polypeptide reads, in one-letter code: uncharacterized protein (1331 aa).

8 helical membrane passes run 373 to 393 (VIGV…SLIV), 487 to 507 (ALFL…LILI), 534 to 554 (LLIF…SFGI), 579 to 599 (VVGL…ISLL), 653 to 673 (LVFL…SFAT), 1206 to 1226 (VIAV…TTLI), 1255 to 1275 (IPLF…LIAL), and 1297 to 1317 (AIGS…LNWL).

This sequence belongs to the ABC-4 integral membrane protein family.

The protein localises to the cell membrane. This is an uncharacterized protein from Mycoplasma genitalium (strain ATCC 33530 / DSM 19775 / NCTC 10195 / G37) (Mycoplasmoides genitalium).